Consider the following 555-residue polypeptide: Inositol 1,4,5-trisphosphate receptor-interacting protein-like 1 (555 aa).

The N-terminal stretch at 1–24 (MNVDAEASMAVISLLFLAVMYVVH) is a signal peptide. The Extracellular segment spans residues 25-103 (HPLMVSDRMD…WPFQADGQEG (79 aa)). Residues 38–74 (LARSRQLEKRMSEEMRLLEMEFEERKRAAEQRQKAEN) adopt a coiled-coil conformation. Residues 104-124 (PLGWMLGNLWNTGLFCLFLVF) traverse the membrane as a helical segment. Residues 125 to 555 (ELLRQNMQHE…LPHAPLAAAP (431 aa)) are Cytoplasmic-facing.

Belongs to the ITPRIP family. As to expression, expressed in testis and tumoral cells.

It localises to the cell membrane. Functionally, functions as a ligand of CD3E, inhibiting TCR-CD3 complex signaling to regulate T cell activation. Induces stable CD3E-NCK1 binding, thereby preventing the CD3E-ZAP70 interaction and subsequently inhibiting the activation of the downstream ERK-NFkB signaling cascade and calcium influx. The protein is Inositol 1,4,5-trisphosphate receptor-interacting protein-like 1 of Homo sapiens (Human).